Consider the following 147-residue polypeptide: Nucleoside diphosphate kinase (147 aa).

Positions 9, 57, 85, 91, 102, and 112 each coordinate ATP. Threonine 91 bears the Phosphothreonine mark. Histidine 115 acts as the Pros-phosphohistidine intermediate in catalysis. Residue serine 122 is modified to Phosphoserine.

Belongs to the NDK family. As to quaternary structure, homotetramer. The cofactor is Mg(2+).

The protein resides in the cytoplasm. It carries out the reaction a 2'-deoxyribonucleoside 5'-diphosphate + ATP = a 2'-deoxyribonucleoside 5'-triphosphate + ADP. It catalyses the reaction a ribonucleoside 5'-diphosphate + ATP = a ribonucleoside 5'-triphosphate + ADP. In terms of biological role, major role in the synthesis of nucleoside triphosphates other than ATP. The ATP gamma phosphate is transferred to the NDP beta phosphate via a ping-pong mechanism, using a phosphorylated active-site intermediate. In Halalkalibacterium halodurans (strain ATCC BAA-125 / DSM 18197 / FERM 7344 / JCM 9153 / C-125) (Bacillus halodurans), this protein is Nucleoside diphosphate kinase.